We begin with the raw amino-acid sequence, 186 residues long: Tumor necrosis factor alpha-induced protein 8-like protein 1 (186 aa).

It belongs to the TNFAIP8 family.

It localises to the cytoplasm. The protein is Tumor necrosis factor alpha-induced protein 8-like protein 1 (TNFAIP8L1) of Gallus gallus (Chicken).